A 147-amino-acid polypeptide reads, in one-letter code: Probable 4-amino-4-deoxy-L-arabinose-phosphoundecaprenol flippase subunit ArnF (147 aa).

Residues 1–23 (MSNDHPQGQLPASPARSALKGYL) lie on the Cytoplasmic side of the membrane. A helical transmembrane segment spans residues 24–44 (YVLGSILLVTAAQLGMKWGVI). The Periplasmic portion of the chain corresponds to 45–62 (QLPTWQMDLAVMLAHPLP). The helical transmembrane segment at 63–83 (LLVILAGVGCYALSLLCWLAA) threads the bilayer. The Cytoplasmic portion of the chain corresponds to 84-93 (LHSTPLNIAY). The chain crosses the membrane as a helical span at residues 94–114 (PLLSTSYALVYLLAVNIPLFA). The Periplasmic segment spans residues 115 to 121 (EPLEPGK). The chain crosses the membrane as a helical span at residues 122 to 142 (ALGVLFILLGAVLVGIKPAAG). Topologically, residues 143-147 (TKQTG) are cytoplasmic.

The protein belongs to the ArnF family. As to quaternary structure, heterodimer of ArnE and ArnF.

It is found in the cell inner membrane. The protein operates within bacterial outer membrane biogenesis; lipopolysaccharide biosynthesis. In terms of biological role, translocates 4-amino-4-deoxy-L-arabinose-phosphoundecaprenol (alpha-L-Ara4N-phosphoundecaprenol) from the cytoplasmic to the periplasmic side of the inner membrane. In Aeromonas hydrophila subsp. hydrophila (strain ATCC 7966 / DSM 30187 / BCRC 13018 / CCUG 14551 / JCM 1027 / KCTC 2358 / NCIMB 9240 / NCTC 8049), this protein is Probable 4-amino-4-deoxy-L-arabinose-phosphoundecaprenol flippase subunit ArnF.